The primary structure comprises 213 residues: ATP phosphoribosyltransferase (213 aa).

It belongs to the ATP phosphoribosyltransferase family. Short subfamily. In terms of assembly, heteromultimer composed of HisG and HisZ subunits.

The protein localises to the cytoplasm. The catalysed reaction is 1-(5-phospho-beta-D-ribosyl)-ATP + diphosphate = 5-phospho-alpha-D-ribose 1-diphosphate + ATP. It participates in amino-acid biosynthesis; L-histidine biosynthesis; L-histidine from 5-phospho-alpha-D-ribose 1-diphosphate: step 1/9. Its function is as follows. Catalyzes the condensation of ATP and 5-phosphoribose 1-diphosphate to form N'-(5'-phosphoribosyl)-ATP (PR-ATP). Has a crucial role in the pathway because the rate of histidine biosynthesis seems to be controlled primarily by regulation of HisG enzymatic activity. This Nitrosococcus oceani (strain ATCC 19707 / BCRC 17464 / JCM 30415 / NCIMB 11848 / C-107) protein is ATP phosphoribosyltransferase.